The sequence spans 124 residues: Fluoride-specific ion channel FluC (124 aa).

4 helical membrane passes run 4 to 24 (VLFVALGGSIGAVLRYLISLL), 35 to 55 (FGTLVVNILGSFLMGVIFALG), 62 to 82 (PEIKAFIGVGMLGALTTFSTF), and 95 to 115 (LVKAVLNVVVNVGVCIFVVYL). 2 residues coordinate Na(+): Gly74 and Thr77.

Belongs to the fluoride channel Fluc/FEX (TC 1.A.43) family.

It is found in the cell inner membrane. It catalyses the reaction fluoride(in) = fluoride(out). Its activity is regulated as follows. Na(+) is not transported, but it plays an essential structural role and its presence is essential for fluoride channel function. Fluoride-specific ion channel. Important for reducing fluoride concentration in the cell, thus reducing its toxicity. In Shewanella halifaxensis (strain HAW-EB4), this protein is Fluoride-specific ion channel FluC.